The chain runs to 159 residues: Mediator of RNA polymerase II transcription subunit 10 (159 aa).

The segment at 54-77 is disordered; it reads STHTKPQPPSQDDEQKGSANDPLL.

Belongs to the Mediator complex subunit 10 family. As to quaternary structure, component of the Mediator complex.

The protein localises to the nucleus. Its function is as follows. Component of the Mediator complex, a coactivator involved in the regulated transcription of nearly all RNA polymerase II-dependent genes. Mediator functions as a bridge to convey information from gene-specific regulatory proteins to the basal RNA polymerase II transcription machinery. Mediator is recruited to promoters by direct interactions with regulatory proteins and serves as a scaffold for the assembly of a functional preinitiation complex with RNA polymerase II and the general transcription factors. This chain is Mediator of RNA polymerase II transcription subunit 10 (nut2), found in Aspergillus fumigatus (strain ATCC MYA-4609 / CBS 101355 / FGSC A1100 / Af293) (Neosartorya fumigata).